Reading from the N-terminus, the 99-residue chain is Essential MCU regulator, mitochondrial (99 aa).

A mitochondrion-targeting transit peptide spans 1-39; it reads MAARVGVLSVAGFRAAARAGGLLRASKQSSAVSHVPCRT. The Mitochondrial matrix portion of the chain corresponds to 40–57; that stretch reads AIATSAGTVLPKPEKVSF. Residues 58–77 form a helical membrane-spanning segment; that stretch reads GLLRVFTVVIPFLYIGTLIS. Residues 78-99 are Mitochondrial intermembrane-facing; it reads KNFAALLEEHDIFVPEDDDDDD.

This sequence belongs to the SMDT1/EMRE family. As to quaternary structure, component of the uniplex complex.

It is found in the mitochondrion inner membrane. Functionally, essential regulatory subunit of the mitochondrial calcium uniporter complex (uniplex), a complex that mediates calcium uptake into mitochondria. Required to bridge the calcium-sensing proteins micu1 with the calcium-conducting subunit mcu. Acts by mediating activation of mcu and retention of micu1 to the mcu pore, in order to ensure tight regulation of the uniplex complex and appropriate responses to intracellular calcium signaling. In Xenopus tropicalis (Western clawed frog), this protein is Essential MCU regulator, mitochondrial.